The sequence spans 565 residues: Laccase-12 (565 aa).

Positions 1 to 24 (MTTVHTFSILLFFCSLFSASLIIA) are cleaved as a signal peptide. 2 consecutive Plastocyanin-like domains span residues 32-148 (VIQE…PTPG) and 158-310 (RQTA…YKKT). An N-linked (GlcNAc...) asparagine glycan is attached at asparagine 78. Cu cation-binding residues include histidine 82, histidine 84, histidine 127, and histidine 129. N-linked (GlcNAc...) asparagine glycosylation is found at asparagine 187, asparagine 203, asparagine 298, asparagine 325, asparagine 377, asparagine 387, asparagine 395, and asparagine 428. In terms of domain architecture, Plastocyanin-like 3 spans 413 to 549 (DFPSKPPVKF…AMAFLVDNGV (137 aa)). Cu cation-binding residues include histidine 466, histidine 469, histidine 471, histidine 528, cysteine 529, histidine 530, and histidine 534.

Belongs to the multicopper oxidase family. Requires Cu cation as cofactor. As to expression, predominantly expressed in the inflorescence stem.

The protein localises to the secreted. The protein resides in the extracellular space. Its subcellular location is the apoplast. The enzyme catalyses 4 hydroquinone + O2 = 4 benzosemiquinone + 2 H2O. In terms of biological role, lignin degradation and detoxification of lignin-derived products. The polypeptide is Laccase-12 (LAC12) (Arabidopsis thaliana (Mouse-ear cress)).